The primary structure comprises 473 residues: Lactate utilization protein B (473 aa).

2 consecutive 4Fe-4S ferredoxin-type domains span residues 302–332 (GSEF…GHSY) and 351–380 (YDDY…LHDL). [4Fe-4S] cluster contacts are provided by Cys-311, Cys-314, Cys-317, Cys-321, Cys-364, Cys-367, and Cys-371.

It belongs to the LutB/YkgF family.

In terms of biological role, is involved in L-lactate degradation and allows cells to grow with lactate as the sole carbon source. Has probably a role as an electron transporter during oxidation of L-lactate. This is Lactate utilization protein B from Bacillus anthracis (strain A0248).